Reading from the N-terminus, the 603-residue chain is MKSGKQSSQPEKGTSRILSLTVLFIAFCGFSFYLGGIFCSERDKIVAKDVTRTTTKAVASPKEPTATPIQIKSVSFPECGSEFQDYTPCTDPKRWKKYGVHRLSFLERHCPPVYEKNECLIPPPDGYKPPIRWPKSREQCWYRNVPYDWINKQKSNQHWLKKEGDKFHFPGGGTMFPRGVSHYVDLMQDLIPEMKDGTVRTAIDTGCGVASWGGDLLDRGILSLSLAPRDNHEAQVQFALERGIPAILGIISTQRLPFPSNAFDMAHCSRCLIPWTEFGGIYLLEIHRIVRPGGFWVLSGPPVNYNRRWRGWNTTMEDQKSDYNKLQSLLTSMCFKKYAQKDDIAVWQKLSDKSCYDKIAKNMEAYPPKCDDSIEPDSAWYTPLRPCVVAPTPKVKKSGLGSIPKWPERLHVAPERIGDVHGGSANSLKHDDGKWKNRVKHYKKVLPALGTDKIRNVMDMNTVYGGFSAALIEDPIWVMNVVSSYSANSLPVVFDRGLIGTYHDWCEAFSTYPRTYDLLHLDSLFTLESHRCEMKYILLEMDRILRPSGYVIIRESSYFMDAITTLAKGIRWSCRREETEYAVKSEKILVCQKKLWFSSNQTS.

Residues 1–16 are Cytoplasmic-facing; sequence MKSGKQSSQPEKGTSR. The helical; Signal-anchor for type II membrane protein transmembrane segment at 17–37 threads the bilayer; the sequence is ILSLTVLFIAFCGFSFYLGGI. The Lumenal portion of the chain corresponds to 38–603; it reads FCSERDKIVA…KLWFSSNQTS (566 aa). 2 N-linked (GlcNAc...) asparagine glycosylation sites follow: Asn-313 and Asn-600.

Belongs to the methyltransferase superfamily.

It localises to the golgi apparatus membrane. The protein is Probable methyltransferase PMT20 of Arabidopsis thaliana (Mouse-ear cress).